Consider the following 3038-residue polypeptide: Lovastatin nonaketide synthase, polyketide synthase component (3038 aa).

A Ketosynthase family 3 (KS3) domain is found at Asn-8–Glu-447. Residues Cys-181, His-320, and His-367 each act as for beta-ketoacyl synthase activity in the active site. The interval Ile-562 to Arg-889 is malonyl-CoA:ACP transacylase (MAT) domain. Catalysis depends on Ser-656, which acts as the For malonyltransferase activity. A lovC-binding region spans residues Ala-695–Lys-757. The segment at His-953–Val-1089 is N-terminal hotdog fold. The dehydratase (DH) domain stretch occupies residues His-953 to Pro-1263. In terms of domain architecture, PKS/mFAS DH spans His-953–Ser-1267. The active-site Proton acceptor; for dehydratase activity is the His-985. The C-terminal hotdog fold stretch occupies residues Glu-1107–Ser-1267. The Proton donor; for dehydratase activity role is filled by Asp-1174. Residues Leu-1443–Gln-1543 form a methyltransferase (CMet) domain region. A ketoreductase (KR) domain region spans residues Thr-2139–Ala-2437. The Carrier domain maps to Gln-2463–Leu-2538. The residue at position 2498 (Ser-2498) is an O-(pantetheine 4'-phosphoryl)serine. The disordered stretch occupies residues Val-2546–Pro-2602. Over residues Ser-2583 to Glu-2594 the composition is skewed to acidic residues. The segment at Pro-2602–Phe-2952 is inactive Condensation domain.

Homodimer. Each MAT domain from the lovB homodimer binds one lovC molecule to form the final active lovB-lovC megasynthase complex. Requires pantetheine 4'-phosphate as cofactor.

It carries out the reaction holo-[lovastatin nonaketide synthase] + 9 malonyl-CoA + S-adenosyl-L-methionine + 11 NADPH + 19 H(+) = dihydromonacolin L-[lovastatin nonaketide synthase] + S-adenosyl-L-homocysteine + 9 CO2 + 11 NADP(+) + 9 CoA + 6 H2O. It functions in the pathway polyketide biosynthesis; lovastatin biosynthesis. In terms of biological role, lovastatin nonaketide synthase; part of the gene cluster that mediates the biosynthesis of lovastatin (also known as mevinolin, mevacor or monacolin K), a hypolipidemic inhibitor of (3S)-hydroxymethylglutaryl-coenzyme A (HMG-CoA) reductase (HMGR). The first step in the biosynthesis of lovastatin is the production of dihydromonacolin L acid by the lovastatin nonaketide synthase lovB and the trans-acting enoyl reductase lovC (called the lovB-lovC megasynthase complex) via condensation of one acetyl-CoA unit and 8 malonyl-CoA units. The formation of the LovB/C complex is essential for the integrity of the catalytic chamber to the complete total synthesis of DML acid. Dihydromonacolin L acid is released from lovB by the thioesterase lovG. Next, dihydromonacolin L acid is oxidized by the dihydromonacolin L monooxygenase lovA twice to form monacolin J acid. The 2-methylbutyrate moiety of lovastatin is synthesized by the lovastatin diketide synthase lovF via condensation of one acetyl-CoA unit and one malonyl-CoA unit. Finally, the covalent attachment of this moiety to monacolin J acid is catalyzed by the transesterase lovD to yield lovastatin. LovD has broad substrate specificity and can also convert monacolin J to simvastatin using alpha-dimethylbutanoyl-S-methyl-3-mercaptopropionate (DMB-S-MMP) as the thioester acyl donor, and can also catalyze the reverse reaction and function as hydrolase in vitro. LovD has much higher activity with LovF-bound 2-methylbutanoate than with free diketide substrates. In Aspergillus terreus, this protein is Lovastatin nonaketide synthase, polyketide synthase component.